The sequence spans 161 residues: Allophycocyanin alpha chain 2 (161 aa).

N4-methylasparagine is present on Asn71. Cys81 lines the (2R,3E)-phycocyanobilin pocket.

It belongs to the phycobiliprotein family. Component of the phycobilisome. Heterodimer of an alpha and a beta chain. Contains one covalently linked bilin chromophore.

It is found in the cellular thylakoid membrane. Light-harvesting photosynthetic bile pigment-protein from the phycobiliprotein complex. Allophycocyanin has a maximum absorption at approximately 650 nanometers. The sequence is that of Allophycocyanin alpha chain 2 (apcA2) from Microchaete diplosiphon (Fremyella diplosiphon).